Consider the following 397-residue polypeptide: Phosphoribulokinase, chloroplastic (397 aa).

The N-terminal 44 residues, 1–44 (MAVSAYTVPTTSHLGFNQKKQLFFCNKSAYKRVSFSSRPCVITC), are a transit peptide targeting the chloroplast. A disulfide bridge links Cys-62 with Cys-101.

It belongs to the phosphoribulokinase family.

The protein localises to the plastid. It localises to the chloroplast. The enzyme catalyses D-ribulose 5-phosphate + ATP = D-ribulose 1,5-bisphosphate + ADP + H(+). It participates in carbohydrate biosynthesis; Calvin cycle. Its activity is regulated as follows. Light regulated via thioredoxin by reversible oxidation/reduction of sulfhydryl/disulfide groups. This Mesembryanthemum crystallinum (Common ice plant) protein is Phosphoribulokinase, chloroplastic.